Reading from the N-terminus, the 74-residue chain is Peptide Im-4 (74 aa).

Residues 1–22 (MKFQYLLAIFMIVLVVTDHCQA) form the signal peptide. K39 is subject to Lysine amide; partial. Residues 40–74 (GRRRRQLEARYEPQQRNFRKREIDFEKLFANMPDY) constitute a propeptide that is removed on maturation.

The protein belongs to the non-disulfide-bridged peptide (NDBP) superfamily. Short antimicrobial peptide (group 4) family. Expressed by the venom gland.

It localises to the secreted. The protein localises to the target cell membrane. Functionally, antimicrobial peptide that probably forms pores in target membranes. Has antibacterial activity against Gram-positive bacteria S.aureus NBRC 13276 (MIC=5-10 uM) and B.subtilis NBRC 3009 (MIC=2.5-5 uM) but not against Gram-negative bacterium E.coli NBRC 3972. The protein is Peptide Im-4 of Isometrus maculatus (Lesser brown scorpion).